A 230-amino-acid chain; its full sequence is 2,3-bisphosphoglycerate-dependent phosphoglycerate mutase (230 aa).

Substrate contacts are provided by residues 8-15, 21-22, R60, 87-90, K98, 114-115, and 183-184; these read RHGQSEWN, TG, ERHY, RR, and GN. Residue H9 is the Tele-phosphohistidine intermediate of the active site. E87 functions as the Proton donor/acceptor in the catalytic mechanism.

This sequence belongs to the phosphoglycerate mutase family. BPG-dependent PGAM subfamily.

It carries out the reaction (2R)-2-phosphoglycerate = (2R)-3-phosphoglycerate. Its pathway is carbohydrate degradation; glycolysis; pyruvate from D-glyceraldehyde 3-phosphate: step 3/5. Its function is as follows. Catalyzes the interconversion of 2-phosphoglycerate and 3-phosphoglycerate. The sequence is that of 2,3-bisphosphoglycerate-dependent phosphoglycerate mutase from Lactobacillus acidophilus (strain ATCC 700396 / NCK56 / N2 / NCFM).